Here is a 191-residue protein sequence, read N- to C-terminus: MSLISRLKAVVAGDEYLDDDFDELDYASEDELNDIDNFKNSPRNKNALANANPFDFMNNNRSSKVVGMPGISNSSSEVSLMEPRSFDEMPQAIQALRERKTVILNLTMMDPDQAQRAVDFIAGGTYAIDGHQERVGESIFLFAPSCVNVTSSSPEEASPSSVPTENTPQYSLGKNTTPEPAWGNSKLSAYS.

The segment covering 151–165 (SSSPEEASPSSVPTE) has biased composition (low complexity). Positions 151–191 (SSSPEEASPSSVPTENTPQYSLGKNTTPEPAWGNSKLSAYS) are disordered. A compositionally biased stretch (polar residues) spans 166-178 (NTPQYSLGKNTTP).

This sequence belongs to the SepF family. Homodimer. Interacts with FtsZ.

The protein localises to the cytoplasm. Its function is as follows. Cell division protein that is part of the divisome complex and is recruited early to the Z-ring. Probably stimulates Z-ring formation, perhaps through the cross-linking of FtsZ protofilaments. Its function overlaps with FtsA. The protein is Cell division protein SepF of Prochlorococcus marinus (strain MIT 9215).